Consider the following 387-residue polypeptide: UDP-N-acetylglucosamine--N-acetylmuramyl-(pentapeptide) pyrophosphoryl-undecaprenol N-acetylglucosamine transferase (387 aa).

Residues 14–16 (TGG), N124, R167, S195, and Q296 each bind UDP-N-acetyl-alpha-D-glucosamine. The tract at residues 366–387 (LPQQNSIEEDSTFEKNQEGAVA) is disordered. Residues 377–387 (TFEKNQEGAVA) show a composition bias toward basic and acidic residues.

It belongs to the glycosyltransferase 28 family. MurG subfamily.

The protein resides in the cell inner membrane. It catalyses the reaction di-trans,octa-cis-undecaprenyl diphospho-N-acetyl-alpha-D-muramoyl-L-alanyl-D-glutamyl-meso-2,6-diaminopimeloyl-D-alanyl-D-alanine + UDP-N-acetyl-alpha-D-glucosamine = di-trans,octa-cis-undecaprenyl diphospho-[N-acetyl-alpha-D-glucosaminyl-(1-&gt;4)]-N-acetyl-alpha-D-muramoyl-L-alanyl-D-glutamyl-meso-2,6-diaminopimeloyl-D-alanyl-D-alanine + UDP + H(+). It functions in the pathway cell wall biogenesis; peptidoglycan biosynthesis. In terms of biological role, cell wall formation. Catalyzes the transfer of a GlcNAc subunit on undecaprenyl-pyrophosphoryl-MurNAc-pentapeptide (lipid intermediate I) to form undecaprenyl-pyrophosphoryl-MurNAc-(pentapeptide)GlcNAc (lipid intermediate II). The polypeptide is UDP-N-acetylglucosamine--N-acetylmuramyl-(pentapeptide) pyrophosphoryl-undecaprenol N-acetylglucosamine transferase (Zymomonas mobilis subsp. mobilis (strain ATCC 31821 / ZM4 / CP4)).